The following is a 382-amino-acid chain: Pyrimidine monooxygenase RutA (382 aa).

Residues 68–69 (IK), asparagine 134, glutamate 143, 159–160 (RY), and serine 209 each bind FMN.

The protein belongs to the NtaA/SnaA/DszA monooxygenase family. RutA subfamily.

The catalysed reaction is uracil + FMNH2 + NADH + O2 = (Z)-3-ureidoacrylate + FMN + NAD(+) + H2O + H(+). The enzyme catalyses thymine + FMNH2 + NADH + O2 = (Z)-2-methylureidoacrylate + FMN + NAD(+) + H2O + H(+). Catalyzes the pyrimidine ring opening between N-3 and C-4 by an unusual flavin hydroperoxide-catalyzed mechanism, adding oxygen atoms in the process to yield ureidoacrylate peracid, that immediately reacts with FMN forming ureidoacrylate and FMN-N(5)-oxide. The FMN-N(5)-oxide reacts spontaneously with NADH to produce FMN. Requires the flavin reductase RutF to regenerate FMN in vivo. This Escherichia coli O55:H7 (strain CB9615 / EPEC) protein is Pyrimidine monooxygenase RutA.